A 376-amino-acid polypeptide reads, in one-letter code: MSIRLDNISKHFGQFQALAPLSLKIEDGEMIGLLGPSGSGKTTLLRIIAGLEGADSGTIHFRNRDVTNVHVRDRRVGFVFQNYALFRHMTVADNVAFGLQVMERAQRPNPAEIQKRVKQLLEIVQLGHLAHRYPEQLSGGQKQRIALARALATQPEVLLLDEPFGALDAKVRKELRRWLRSLHDELGFTSVFVTHDQDEALELSDRVVVMSNGRIEQIDSPVELYAQPNSRFVFDFFGNVNQFAGEWQNGQWVNGSAFIQPPESDATRQSGLLYVRSHELALSDKENSQASLPFEVVSINPVGAEVRVELASVGWQSQELWEAKLSHRSLSEKRLSRGDQVFATPQVGYFFASEGQSSPSVLRWPFLAPGSLMFEI.

The ABC transporter domain occupies 3–237 (IRLDNISKHF…PNSRFVFDFF (235 aa)). Residue 35-42 (GPSGSGKT) participates in ATP binding.

This sequence belongs to the ABC transporter superfamily. Sulfate/tungstate importer (TC 3.A.1.6) family. In terms of assembly, the complex is composed of two ATP-binding proteins (CysA), two transmembrane proteins (CysT and CysW) and a solute-binding protein (CysP).

The protein localises to the cell inner membrane. It catalyses the reaction sulfate(out) + ATP + H2O = sulfate(in) + ADP + phosphate + H(+). The enzyme catalyses thiosulfate(out) + ATP + H2O = thiosulfate(in) + ADP + phosphate + H(+). Its function is as follows. Part of the ABC transporter complex CysAWTP involved in sulfate/thiosulfate import. Responsible for energy coupling to the transport system. The protein is Sulfate/thiosulfate import ATP-binding protein CysA of Vibrio cholerae serotype O1 (strain ATCC 39315 / El Tor Inaba N16961).